The sequence spans 234 residues: LexA repressor (234 aa).

Positions 26 to 46 form a DNA-binding region, H-T-H motif; it reads FDEMKEALDLASKSGIHRLIT. The interval 73–107 is disordered; sequence ATAAAPPKGRGAFRPQVFEGGGAPPPAASPAAAAN. Catalysis depends on for autocatalytic cleavage activity residues S155 and K192.

Belongs to the peptidase S24 family. Homodimer.

The enzyme catalyses Hydrolysis of Ala-|-Gly bond in repressor LexA.. Its function is as follows. Represses a number of genes involved in the response to DNA damage (SOS response), including recA and lexA. In the presence of single-stranded DNA, RecA interacts with LexA causing an autocatalytic cleavage which disrupts the DNA-binding part of LexA, leading to derepression of the SOS regulon and eventually DNA repair. This is LexA repressor from Caulobacter vibrioides (strain ATCC 19089 / CIP 103742 / CB 15) (Caulobacter crescentus).